The primary structure comprises 202 residues: MTTAPRIGRATRTTSESDITVEINLDGTGTVDIDTGLPFFDHMLTAFGVHGSFDLTVHAKGDIEIDAHHTVEDTAIVLGQALLDAIGDKKGIRRFASCQLPMDEALVEAVVDISGRPYFVINGEPDHMISAVIGGHYATVINEHFFETLALNSRITLHVICHYGRDPHHITEAEYKAVARALRAAVEMDPRQTGIPSTKGAL.

It belongs to the imidazoleglycerol-phosphate dehydratase family.

Its subcellular location is the cytoplasm. The enzyme catalyses D-erythro-1-(imidazol-4-yl)glycerol 3-phosphate = 3-(imidazol-4-yl)-2-oxopropyl phosphate + H2O. Its pathway is amino-acid biosynthesis; L-histidine biosynthesis; L-histidine from 5-phospho-alpha-D-ribose 1-diphosphate: step 6/9. The sequence is that of Imidazoleglycerol-phosphate dehydratase from Corynebacterium efficiens (strain DSM 44549 / YS-314 / AJ 12310 / JCM 11189 / NBRC 100395).